We begin with the raw amino-acid sequence, 435 residues long: Serine--tRNA ligase (435 aa).

234 to 236 provides a ligand contact to L-serine; it reads TAE. 265-267 contributes to the ATP binding site; it reads RRE. L-serine is bound at residue Glu-288. ATP is bound at residue 352–355; sequence EISS. Residue Ser-388 coordinates L-serine.

It belongs to the class-II aminoacyl-tRNA synthetase family. Type-1 seryl-tRNA synthetase subfamily. As to quaternary structure, homodimer. The tRNA molecule binds across the dimer.

It is found in the cytoplasm. It carries out the reaction tRNA(Ser) + L-serine + ATP = L-seryl-tRNA(Ser) + AMP + diphosphate + H(+). It catalyses the reaction tRNA(Sec) + L-serine + ATP = L-seryl-tRNA(Sec) + AMP + diphosphate + H(+). It participates in aminoacyl-tRNA biosynthesis; selenocysteinyl-tRNA(Sec) biosynthesis; L-seryl-tRNA(Sec) from L-serine and tRNA(Sec): step 1/1. In terms of biological role, catalyzes the attachment of serine to tRNA(Ser). Is also able to aminoacylate tRNA(Sec) with serine, to form the misacylated tRNA L-seryl-tRNA(Sec), which will be further converted into selenocysteinyl-tRNA(Sec). The protein is Serine--tRNA ligase of Synechococcus sp. (strain JA-2-3B'a(2-13)) (Cyanobacteria bacterium Yellowstone B-Prime).